The primary structure comprises 475 residues: WASH complex subunit 1 (475 aa).

The segment at 1 to 54 (MTAVKTQHSLAGQVYAVPLIQPDLRREEAIQQVADALQYLQNISGDIFSRISQR) is required for WASH complex assembly. The segment at 1-167 (MTAVKTQHSL…EGLGGLPSNI (167 aa)) is WHD1. Residue K219 forms a Glycyl lysine isopeptide (Lys-Gly) (interchain with G-Cter in ubiquitin) linkage. The segment at 296–475 (EDGALLAPPP…GDEDEDDWES (180 aa)) is disordered. Residues 302–318 (APPPPPPPPPPPPPPAP) are compositionally biased toward pro residues. Positions 357–475 (QGAPKEVVDP…GDEDEDDWES (119 aa)) are VCA. The WH2 domain maps to 369 to 391 (GRATLLESIRQAGGIGKAKLRSV). Basic and acidic residues predominate over residues 390 to 406 (SVKERKLEKKKQKEQEQ). Positions 432–446 (SGKGPGTGTSEGPGG) are enriched in gly residues. The segment covering 466-475 (GDEDEDDWES) has biased composition (acidic residues).

Belongs to the WASH1 family. As to quaternary structure, component of the WASH core complex also described as WASH regulatory complex SHRC composed of WASHC1, WASHC2, WASHC3, WASHC4 and WASHC5. The WASH core complex associates with the F-actin-capping protein dimer (formed by CAPZA1, CAPZA2 or CAPZA3 and CAPZB) in a transient or substoichiometric manner which was initially described as WASH complex. Interacts (via WHD1 region) with WASHC2; the interaction is direct. Interacts with BECN1; WASHC1 and AMBRA1 can competitively interact with BECN1. Interacts with BLOC1S2; may associate with the BLOC-1 complex. Interacts with tubulin gamma chain (TUBG1 or TUBG2). Interacts with TBC1D23. Post-translationally, ubiquitinated at Lys-219 via 'Lys-63'-linked ubiquitin chains by the TRIM27:MAGEL2 E3 ubiquitin ligase complex, leading to promote endosomal F-actin assembly.

The protein localises to the early endosome membrane. It localises to the recycling endosome membrane. Acts as a component of the WASH core complex that functions as a nucleation-promoting factor (NPF) at the surface of endosomes, where it recruits and activates the Arp2/3 complex to induce actin polymerization, playing a key role in the fission of tubules that serve as transport intermediates during endosome sorting. Regulates the trafficking of endosomal alpha5beta1 integrin to the plasma membrane and involved in invasive cell migration. In T-cells involved in endosome-to-membrane recycling of receptors including T-cell receptor (TCR), CD28 and ITGAL; proposed to be implicated in T-cell proliferation and effector function. In dendritic cells involved in endosome-to-membrane recycling of major histocompatibility complex (MHC) class II probably involving retromer and subsequently allowing antigen sampling, loading and presentation during T-cell activation. Involved in cytokinesis and following polar body extrusion during oocyte meiotic maturation. Involved in Arp2/3 complex-dependent actin assembly driving Salmonella typhimurium invasion independent of ruffling. Involved in the exocytosis of MMP14 leading to matrix remodeling during invasive migration and implicating late endosome-to-plasma membrane tubular connections and cooperation with the exocyst complex. Involved in negative regulation of autophagy independently from its role in endosomal sorting by inhibiting BECN1 ubiquitination to inactivate PIK3C3/Vps34 activity. The sequence is that of WASH complex subunit 1 from Rattus norvegicus (Rat).